A 262-amino-acid chain; its full sequence is ELL-associated factor 2 (262 aa).

The segment at 17–104 (LKLGESFEKQ…TGECRLEKLS (88 aa)) is necessary for interaction with ELL. Phosphoserine is present on residues Ser146, Ser151, and Ser154. A disordered region spans residues 170–237 (MDQMSSCDSS…EADATCHRLQ (68 aa)). Positions 174–192 (SSCDSSSDSKSSSSSSSED) are enriched in low complexity. Residues 177-262 (DSSSDSKSSS…LSESESDSED (86 aa)) form a necessary for transactivation activity region. Positions 193 to 202 (SSSDSEDDDQ) are enriched in acidic residues. Over residues 227 to 237 (SEADATCHRLQ) the composition is skewed to basic and acidic residues. Residues 248 to 262 (RSDLQLSESESDSED) form a necessary for interaction with TCEA1 and transactivation activity region.

The protein belongs to the EAF family. Component of the super elongation complex (SEC), at least composed of EAF1, EAF2, CDK9, MLLT3/AF9, AFF (AFF1 or AFF4), the P-TEFb complex and ELL (ELL, ELL2 or ELL3). Interacts with ELL and ELL2. Isoform 1 and isoform 2 interact with TCEA1. As to expression, isoform 1 is expressed in ovary, uterus, mammary glands, brain, spleen, liver, lung, thymus, kidney, skeletal muscle, skin and testis. Isoform 2 is expressed in kidney.

It is found in the nucleus speckle. Acts as a transcriptional transactivator of ELL and ELL2 elongation activities. Acts as a transcriptional transactivator of TCEA1 elongation activity. The chain is ELL-associated factor 2 (Eaf2) from Mus musculus (Mouse).